Here is a 121-residue protein sequence, read N- to C-terminus: Neuromedin-B (121 aa).

The first 24 residues, 1-24, serve as a signal peptide directing secretion; the sequence is MTLRAVGVRLLGGLLLFALLAAGA. Position 56 is a methionine amide (M56). Positions 60 to 121 are excised as a propeptide; it reads SLEPPSPSLL…RRLLVQTLQK (62 aa). Residues 61 to 80 form a disordered region; that stretch reads LEPPSPSLLGTAPHTSLRDQ.

Belongs to the bombesin/neuromedin-B/ranatensin family.

It is found in the secreted. It localises to the cell projection. The protein localises to the neuron projection. In terms of biological role, stimulates smooth muscle contraction. Induces sighing by acting directly on the pre-Botzinger complex, a cluster of several thousand neurons in the ventrolateral medulla responsible for inspiration during respiratory activity. Contributes to the induction of sneezing following exposure to chemical irritants or allergens which causes release of NMB by nasal sensory neurons and activation of NMBR-expressing neurons in the sneeze-evoking region of the brainstem. These in turn activate neurons of the caudal ventral respiratory group, giving rise to the sneezing response. Contributes to induction of acute itch, possibly through activation of the NMBR receptor on dorsal root ganglion neurons. Increases expression of NMBR and steroidogenic mediators STAR, CYP11A1 and HSD3B1 in Leydig cells, induces secretion of testosterone by Leydig cells and also promotes Leydig cell proliferation. Plays a role in the innate immune response to influenza A virus infection by enhancing interferon alpha expression and reducing expression of IL6. Plays a role in CSF1-induced proliferation of osteoclast precursors by contributing to the positive regulation of the expression of the CSF1 receptor CSF1R. In Bos taurus (Bovine), this protein is Neuromedin-B (NMB).